Here is a 441-residue protein sequence, read N- to C-terminus: C4-dicarboxylate transport protein (441 aa).

The next 8 helical transmembrane spans lie at 9–29, 45–65, 79–99, 145–165, 187–207, 220–240, 308–328, and 356–376; these read SLYF…HFMP, LVKM…IAGM, LLYF…VVNV, AFAE…GFAL, FAAI…AMAF, LAAL…LVLG, IYLT…LTLT, and AATL…ILGI.

This sequence belongs to the dicarboxylate/amino acid:cation symporter (DAACS) (TC 2.A.23) family.

It localises to the cell inner membrane. Functionally, responsible for the transport of dicarboxylates such as succinate, fumarate, and malate from the periplasm across the membrane. This chain is C4-dicarboxylate transport protein, found in Laribacter hongkongensis (strain HLHK9).